Consider the following 479-residue polypeptide: Ribosomal protein uS12 methylthiotransferase RimO (479 aa).

Residues 1 to 34 (MTVNTFDPSKASPVTHASDSASKTPEPNAVAAPS) form a disordered region. The span at 15-25 (THASDSASKTP) shows a compositional bias: polar residues. The region spanning 39 to 151 (NRVGFVSLGC…VMGAVHGYIP (113 aa)) is the MTTase N-terminal domain. Positions 48, 84, 113, 184, 188, and 191 each coordinate [4Fe-4S] cluster. Residues 170-407 (LTPRHYAYLK…METQQAISAA (238 aa)) enclose the Radical SAM core domain. Residues 410–476 (KQKVGYEMDV…DYDLTGIAVE (67 aa)) form the TRAM domain.

It belongs to the methylthiotransferase family. RimO subfamily. It depends on [4Fe-4S] cluster as a cofactor.

It is found in the cytoplasm. The catalysed reaction is L-aspartate(89)-[ribosomal protein uS12]-hydrogen + (sulfur carrier)-SH + AH2 + 2 S-adenosyl-L-methionine = 3-methylsulfanyl-L-aspartate(89)-[ribosomal protein uS12]-hydrogen + (sulfur carrier)-H + 5'-deoxyadenosine + L-methionine + A + S-adenosyl-L-homocysteine + 2 H(+). Functionally, catalyzes the methylthiolation of an aspartic acid residue of ribosomal protein uS12. The protein is Ribosomal protein uS12 methylthiotransferase RimO of Saccharophagus degradans (strain 2-40 / ATCC 43961 / DSM 17024).